Reading from the N-terminus, the 370-residue chain is Holliday junction branch migration complex subunit RuvB (370 aa).

The disordered stretch occupies residues 1 to 53; sequence MAILSSQKQPLEPEPSKNPQSVQQPGLPPSTPEQGLLTAEVSPEERLSRTDDI. Residues 13–214 form a large ATPase domain (RuvB-L) region; sequence PEPSKNPQSV…FGLIQRLRFY (202 aa). The span at 43–53 shows a compositional bias: basic and acidic residues; it reads PEERLSRTDDI. ATP-binding positions include Ile53, Arg54, Gly95, Lys98, Thr99, Thr100, 161–163, Arg204, Tyr214, and Arg251; that span reads EDF. Thr99 contacts Mg(2+). The interval 215–285 is small ATPAse domain (RuvB-S); the sequence is EPEELSQIIL…IASEALQLFN (71 aa). The interval 288 to 370 is head domain (RuvB-H); the sequence is PCGLDWTDRR…TPPDGQLSLL (83 aa). Positions 343 and 348 each coordinate DNA.

This sequence belongs to the RuvB family. As to quaternary structure, homohexamer. Forms an RuvA(8)-RuvB(12)-Holliday junction (HJ) complex. HJ DNA is sandwiched between 2 RuvA tetramers; dsDNA enters through RuvA and exits via RuvB. An RuvB hexamer assembles on each DNA strand where it exits the tetramer. Each RuvB hexamer is contacted by two RuvA subunits (via domain III) on 2 adjacent RuvB subunits; this complex drives branch migration. In the full resolvosome a probable DNA-RuvA(4)-RuvB(12)-RuvC(2) complex forms which resolves the HJ.

Its subcellular location is the cytoplasm. The catalysed reaction is ATP + H2O = ADP + phosphate + H(+). In terms of biological role, the RuvA-RuvB-RuvC complex processes Holliday junction (HJ) DNA during genetic recombination and DNA repair, while the RuvA-RuvB complex plays an important role in the rescue of blocked DNA replication forks via replication fork reversal (RFR). RuvA specifically binds to HJ cruciform DNA, conferring on it an open structure. The RuvB hexamer acts as an ATP-dependent pump, pulling dsDNA into and through the RuvAB complex. RuvB forms 2 homohexamers on either side of HJ DNA bound by 1 or 2 RuvA tetramers; 4 subunits per hexamer contact DNA at a time. Coordinated motions by a converter formed by DNA-disengaged RuvB subunits stimulates ATP hydrolysis and nucleotide exchange. Immobilization of the converter enables RuvB to convert the ATP-contained energy into a lever motion, pulling 2 nucleotides of DNA out of the RuvA tetramer per ATP hydrolyzed, thus driving DNA branch migration. The RuvB motors rotate together with the DNA substrate, which together with the progressing nucleotide cycle form the mechanistic basis for DNA recombination by continuous HJ branch migration. Branch migration allows RuvC to scan DNA until it finds its consensus sequence, where it cleaves and resolves cruciform DNA. The protein is Holliday junction branch migration complex subunit RuvB of Cyanothece sp. (strain PCC 7425 / ATCC 29141).